Here is a 242-residue protein sequence, read N- to C-terminus: N-acetylmuramate alpha-1-phosphate uridylyltransferase (242 aa).

Residues 16-18 and Lys28 each bind UTP; that span reads GTR. Residue Asn113 coordinates substrate. Position 115 (Asp115) interacts with Mg(2+). Position 158 (Asp158) interacts with substrate.

Belongs to the nucleotidyltransferase MurU family. In terms of assembly, monomer. Requires Mg(2+) as cofactor.

The catalysed reaction is N-acetyl-alpha-D-muramate 1-phosphate + UDP + H(+) = UDP-N-acetyl-alpha-D-muramate + phosphate. It participates in cell wall biogenesis; peptidoglycan recycling. Functionally, catalyzes the formation of UDP-N-acetylmuramate (UDP-MurNAc), a crucial precursor of the bacterial peptidoglycan cell wall, from UTP and MurNAc-alpha-1P. Is likely involved in peptidoglycan recycling as part of a cell wall recycling pathway that bypasses de novo biosynthesis of the peptidoglycan precursor UDP-MurNAc. Is able to complement the fosfomycin sensitivity phenotype of a P.putida mutant lacking murU. In Caulobacter vibrioides (strain ATCC 19089 / CIP 103742 / CB 15) (Caulobacter crescentus), this protein is N-acetylmuramate alpha-1-phosphate uridylyltransferase.